A 293-amino-acid chain; its full sequence is MEEPSGAQLLGPVEIRALAEKLDVTPTKKLGQNFVHDPNTVRRIVAAAELTPDDHVVEVGPGLGSLTLALVESAASVTAVEIDPRLAAELPETFQWRAPALAHKLSIVLKDALKVQQSDMEVQPTALVANLPYNVSVPVLLHMLEEFPTINKVLVMVQAEVADRLAADPGSKIYGVPSVKASFYGPVTRAGSIGKNVFWPAPKIESGLVKIVREDTAWKQDDETRKKVWPIIDAAFLQRRKTLRAALSGHYGSGQAAEEALRAADIDPTLRGEKLDVTDYVRLAGVLQQKDEK.

The S-adenosyl-L-methionine site is built by Asn33, Val35, Gly60, Glu81, Asp111, and Asn130.

It belongs to the class I-like SAM-binding methyltransferase superfamily. rRNA adenine N(6)-methyltransferase family. RsmA subfamily.

It is found in the cytoplasm. The enzyme catalyses adenosine(1518)/adenosine(1519) in 16S rRNA + 4 S-adenosyl-L-methionine = N(6)-dimethyladenosine(1518)/N(6)-dimethyladenosine(1519) in 16S rRNA + 4 S-adenosyl-L-homocysteine + 4 H(+). Functionally, specifically dimethylates two adjacent adenosines (A1518 and A1519) in the loop of a conserved hairpin near the 3'-end of 16S rRNA in the 30S particle. May play a critical role in biogenesis of 30S subunits. The chain is Ribosomal RNA small subunit methyltransferase A from Corynebacterium glutamicum (strain R).